We begin with the raw amino-acid sequence, 397 residues long: Ornithine aminotransferase (397 aa).

Position 255 is an N6-(pyridoxal phosphate)lysine (Lys255).

Belongs to the class-III pyridoxal-phosphate-dependent aminotransferase family. OAT subfamily. Pyridoxal 5'-phosphate is required as a cofactor.

Its subcellular location is the cytoplasm. The enzyme catalyses a 2-oxocarboxylate + L-ornithine = L-glutamate 5-semialdehyde + an L-alpha-amino acid. The protein operates within amino-acid biosynthesis; L-proline biosynthesis; L-glutamate 5-semialdehyde from L-ornithine: step 1/1. Its function is as follows. Catalyzes the interconversion of ornithine to glutamate semialdehyde. This Macrococcus caseolyticus (strain JCSC5402) (Macrococcoides caseolyticum) protein is Ornithine aminotransferase.